The following is a 109-amino-acid chain: Nucleoid-associated protein Cvib_1034 (109 aa).

The protein belongs to the YbaB/EbfC family. Homodimer.

The protein localises to the cytoplasm. It is found in the nucleoid. Its function is as follows. Binds to DNA and alters its conformation. May be involved in regulation of gene expression, nucleoid organization and DNA protection. This chain is Nucleoid-associated protein Cvib_1034, found in Chlorobium phaeovibrioides (strain DSM 265 / 1930) (Prosthecochloris vibrioformis (strain DSM 265)).